The following is a 294-amino-acid chain: tRNA pseudouridine synthase B (294 aa).

The active-site Nucleophile is D39.

Belongs to the pseudouridine synthase TruB family. Type 1 subfamily.

The enzyme catalyses uridine(55) in tRNA = pseudouridine(55) in tRNA. Functionally, responsible for synthesis of pseudouridine from uracil-55 in the psi GC loop of transfer RNAs. This is tRNA pseudouridine synthase B from Streptococcus pyogenes serotype M3 (strain ATCC BAA-595 / MGAS315).